Here is a 142-residue protein sequence, read N- to C-terminus: uncharacterized protein (142 aa).

This is an uncharacterized protein from Saccharomyces cerevisiae (strain ATCC 204508 / S288c) (Baker's yeast).